We begin with the raw amino-acid sequence, 526 residues long: UDP-N-acetylmuramoyl-L-alanyl-D-glutamate--2,6-diaminopimelate ligase (526 aa).

UDP-N-acetyl-alpha-D-muramoyl-L-alanyl-D-glutamate contacts are provided by Leu-48 and Ser-50. 136–142 (GTSGKTT) lines the ATP pocket. UDP-N-acetyl-alpha-D-muramoyl-L-alanyl-D-glutamate contacts are provided by residues 178-179 (TT), Ser-205, and Arg-213. Lys-245 is modified (N6-carboxylysine). Residues Arg-408, 432 to 435 (DNPR), Gly-490, and Glu-494 each bind meso-2,6-diaminopimelate. The short motif at 432–435 (DNPR) is the Meso-diaminopimelate recognition motif element.

Belongs to the MurCDEF family. MurE subfamily. The cofactor is Mg(2+). In terms of processing, carboxylation is probably crucial for Mg(2+) binding and, consequently, for the gamma-phosphate positioning of ATP.

The protein localises to the cytoplasm. It catalyses the reaction UDP-N-acetyl-alpha-D-muramoyl-L-alanyl-D-glutamate + meso-2,6-diaminopimelate + ATP = UDP-N-acetyl-alpha-D-muramoyl-L-alanyl-gamma-D-glutamyl-meso-2,6-diaminopimelate + ADP + phosphate + H(+). The protein operates within cell wall biogenesis; peptidoglycan biosynthesis. Functionally, catalyzes the addition of meso-diaminopimelic acid to the nucleotide precursor UDP-N-acetylmuramoyl-L-alanyl-D-glutamate (UMAG) in the biosynthesis of bacterial cell-wall peptidoglycan. This chain is UDP-N-acetylmuramoyl-L-alanyl-D-glutamate--2,6-diaminopimelate ligase, found in Corynebacterium efficiens (strain DSM 44549 / YS-314 / AJ 12310 / JCM 11189 / NBRC 100395).